The following is a 456-amino-acid chain: Bifunctional protein GlmU (456 aa).

The segment at 1 to 229 is pyrophosphorylase; the sequence is MYKCALILAA…FEEILGVNSR (229 aa). UDP-N-acetyl-alpha-D-glucosamine contacts are provided by residues 8–11, K22, Q73, and 78–79; these read LAAG and GT. D103 is a Mg(2+) binding site. UDP-N-acetyl-alpha-D-glucosamine is bound by residues G140, E155, N170, and N227. Residue N227 participates in Mg(2+) binding. The tract at residues 230–250 is linker; it reads LQLCQVGKVMQKRINEKHMEN. The interval 251–456 is N-acetyltransferase; that stretch reads GSTLIDPDNT…GWVDKKGLLK (206 aa). Residues R332 and K350 each coordinate UDP-N-acetyl-alpha-D-glucosamine. H362 serves as the catalytic Proton acceptor. UDP-N-acetyl-alpha-D-glucosamine contacts are provided by Y365 and N376. Acetyl-CoA contacts are provided by residues 385–386, A422, and R439; that span reads NY.

The protein in the N-terminal section; belongs to the N-acetylglucosamine-1-phosphate uridyltransferase family. This sequence in the C-terminal section; belongs to the transferase hexapeptide repeat family. In terms of assembly, homotrimer. The cofactor is Mg(2+).

The protein resides in the cytoplasm. It carries out the reaction alpha-D-glucosamine 1-phosphate + acetyl-CoA = N-acetyl-alpha-D-glucosamine 1-phosphate + CoA + H(+). The enzyme catalyses N-acetyl-alpha-D-glucosamine 1-phosphate + UTP + H(+) = UDP-N-acetyl-alpha-D-glucosamine + diphosphate. It functions in the pathway nucleotide-sugar biosynthesis; UDP-N-acetyl-alpha-D-glucosamine biosynthesis; N-acetyl-alpha-D-glucosamine 1-phosphate from alpha-D-glucosamine 6-phosphate (route II): step 2/2. The protein operates within nucleotide-sugar biosynthesis; UDP-N-acetyl-alpha-D-glucosamine biosynthesis; UDP-N-acetyl-alpha-D-glucosamine from N-acetyl-alpha-D-glucosamine 1-phosphate: step 1/1. Its pathway is bacterial outer membrane biogenesis; LPS lipid A biosynthesis. Its function is as follows. Catalyzes the last two sequential reactions in the de novo biosynthetic pathway for UDP-N-acetylglucosamine (UDP-GlcNAc). The C-terminal domain catalyzes the transfer of acetyl group from acetyl coenzyme A to glucosamine-1-phosphate (GlcN-1-P) to produce N-acetylglucosamine-1-phosphate (GlcNAc-1-P), which is converted into UDP-GlcNAc by the transfer of uridine 5-monophosphate (from uridine 5-triphosphate), a reaction catalyzed by the N-terminal domain. This Clostridium acetobutylicum (strain ATCC 824 / DSM 792 / JCM 1419 / IAM 19013 / LMG 5710 / NBRC 13948 / NRRL B-527 / VKM B-1787 / 2291 / W) protein is Bifunctional protein GlmU.